Reading from the N-terminus, the 122-residue chain is Protein translocase subunit SecE (122 aa).

Transmembrane regions (helical) follow at residues 14-34 (LLKW…NQYF), 38-58 (PILY…FLAL), and 93-113 (LIVV…DSLL).

It belongs to the SecE/SEC61-gamma family. In terms of assembly, component of the Sec protein translocase complex. Heterotrimer consisting of SecY, SecE and SecG subunits. The heterotrimers can form oligomers, although 1 heterotrimer is thought to be able to translocate proteins. Interacts with the ribosome. Interacts with SecDF, and other proteins may be involved. Interacts with SecA.

Its subcellular location is the cell inner membrane. Essential subunit of the Sec protein translocation channel SecYEG. Clamps together the 2 halves of SecY. May contact the channel plug during translocation. The polypeptide is Protein translocase subunit SecE (Pseudomonas aeruginosa (strain ATCC 15692 / DSM 22644 / CIP 104116 / JCM 14847 / LMG 12228 / 1C / PRS 101 / PAO1)).